The primary structure comprises 166 residues: Large ribosomal subunit protein uL10 (166 aa).

The protein belongs to the universal ribosomal protein uL10 family. In terms of assembly, part of the ribosomal stalk of the 50S ribosomal subunit. The N-terminus interacts with L11 and the large rRNA to form the base of the stalk. The C-terminus forms an elongated spine to which L12 dimers bind in a sequential fashion forming a multimeric L10(L12)X complex.

Functionally, forms part of the ribosomal stalk, playing a central role in the interaction of the ribosome with GTP-bound translation factors. This chain is Large ribosomal subunit protein uL10, found in Bacillus pumilus (strain SAFR-032).